A 438-amino-acid polypeptide reads, in one-letter code: Putative F-box/FBD/LRR-repeat protein At5g44950 (438 aa).

The F-box domain maps to 3–49 (RDRISELPDGLLNHILMYLHIEESIRTSVLSSRWRKLWLKVPGLDVN). 2 LRR repeats span residues 246–275 (LSSL…DLTK) and 286–310 (ISSV…KIGQ). The FBD domain maps to 355–407 (PEQIDFTNLPRCLISTLEYVEIKQLTMREESGIKLVKYFLENSAVLKKLTLSF).

The polypeptide is Putative F-box/FBD/LRR-repeat protein At5g44950 (Arabidopsis thaliana (Mouse-ear cress)).